Here is a 283-residue protein sequence, read N- to C-terminus: Bifunctional protein FolD (283 aa).

Residues 165-167 (GAS) and Ser-190 contribute to the NADP(+) site.

The protein belongs to the tetrahydrofolate dehydrogenase/cyclohydrolase family. As to quaternary structure, homodimer.

The catalysed reaction is (6R)-5,10-methylene-5,6,7,8-tetrahydrofolate + NADP(+) = (6R)-5,10-methenyltetrahydrofolate + NADPH. The enzyme catalyses (6R)-5,10-methenyltetrahydrofolate + H2O = (6R)-10-formyltetrahydrofolate + H(+). The protein operates within one-carbon metabolism; tetrahydrofolate interconversion. Catalyzes the oxidation of 5,10-methylenetetrahydrofolate to 5,10-methenyltetrahydrofolate and then the hydrolysis of 5,10-methenyltetrahydrofolate to 10-formyltetrahydrofolate. The protein is Bifunctional protein FolD of Cupriavidus necator (strain ATCC 17699 / DSM 428 / KCTC 22496 / NCIMB 10442 / H16 / Stanier 337) (Ralstonia eutropha).